Reading from the N-terminus, the 94-residue chain is Large ribosomal subunit protein uL23 (94 aa).

This sequence belongs to the universal ribosomal protein uL23 family. As to quaternary structure, part of the 50S ribosomal subunit. Contacts protein L29, and trigger factor when it is bound to the ribosome.

One of the early assembly proteins it binds 23S rRNA. One of the proteins that surrounds the polypeptide exit tunnel on the outside of the ribosome. Forms the main docking site for trigger factor binding to the ribosome. The protein is Large ribosomal subunit protein uL23 of Treponema denticola (strain ATCC 35405 / DSM 14222 / CIP 103919 / JCM 8153 / KCTC 15104).